The primary structure comprises 172 residues: Galectin-related protein (172 aa).

Alanine 2 is modified (N-acetylalanine). Phosphoserine is present on residues serine 22 and serine 25. One can recognise a Galectin domain in the interval proline 39–isoleucine 168.

In terms of assembly, monomer.

Functionally, does not bind lactose, and may not bind carbohydrates. The sequence is that of Galectin-related protein (Lgalsl) from Mus musculus (Mouse).